The chain runs to 597 residues: Elongation factor 4 (597 aa).

Positions 2 to 184 (DHIRNFSIIA…SLIAKVPPPK (183 aa)) constitute a tr-type G domain. GTP-binding positions include 14–19 (DHGKST) and 131–134 (NKID).

The protein belongs to the TRAFAC class translation factor GTPase superfamily. Classic translation factor GTPase family. LepA subfamily.

It localises to the cell inner membrane. The catalysed reaction is GTP + H2O = GDP + phosphate + H(+). Its function is as follows. Required for accurate and efficient protein synthesis under certain stress conditions. May act as a fidelity factor of the translation reaction, by catalyzing a one-codon backward translocation of tRNAs on improperly translocated ribosomes. Back-translocation proceeds from a post-translocation (POST) complex to a pre-translocation (PRE) complex, thus giving elongation factor G a second chance to translocate the tRNAs correctly. Binds to ribosomes in a GTP-dependent manner. This Burkholderia pseudomallei (strain 1710b) protein is Elongation factor 4.